We begin with the raw amino-acid sequence, 230 residues long: NAD(P)H-hydrate epimerase (230 aa).

Residues 11-218 (AIDVDQELFT…ALQRKYGLNL (208 aa)) form the YjeF N-terminal domain. 61 to 65 (NNGGD) contacts (6S)-NADPHX. Residues N62 and D126 each contribute to the K(+) site. (6S)-NADPHX is bound by residues 130 to 136 (GFSFKPP) and D159. Position 162 (S162) interacts with K(+).

The protein belongs to the NnrE/AIBP family. It depends on K(+) as a cofactor.

It carries out the reaction (6R)-NADHX = (6S)-NADHX. The enzyme catalyses (6R)-NADPHX = (6S)-NADPHX. Its function is as follows. Catalyzes the epimerization of the S- and R-forms of NAD(P)HX, a damaged form of NAD(P)H that is a result of enzymatic or heat-dependent hydration. This is a prerequisite for the S-specific NAD(P)H-hydrate dehydratase to allow the repair of both epimers of NAD(P)HX. In Drosophila yakuba (Fruit fly), this protein is NAD(P)H-hydrate epimerase.